The primary structure comprises 122 residues: Large ribosomal subunit protein uL14 (122 aa).

This sequence belongs to the universal ribosomal protein uL14 family. In terms of assembly, part of the 50S ribosomal subunit. Forms a cluster with proteins L3 and L19. In the 70S ribosome, L14 and L19 interact and together make contacts with the 16S rRNA in bridges B5 and B8.

Its function is as follows. Binds to 23S rRNA. Forms part of two intersubunit bridges in the 70S ribosome. This is Large ribosomal subunit protein uL14 from Mycoplasma mobile (strain ATCC 43663 / 163K / NCTC 11711) (Mesomycoplasma mobile).